The chain runs to 406 residues: 2,3-bisphosphoglycerate-independent phosphoglycerate mutase (406 aa).

This sequence belongs to the BPG-independent phosphoglycerate mutase family. A-PGAM subfamily.

It catalyses the reaction (2R)-2-phosphoglycerate = (2R)-3-phosphoglycerate. The protein operates within carbohydrate degradation; glycolysis; pyruvate from D-glyceraldehyde 3-phosphate: step 3/5. Catalyzes the interconversion of 2-phosphoglycerate and 3-phosphoglycerate. The protein is 2,3-bisphosphoglycerate-independent phosphoglycerate mutase of Methanococcus maripaludis (strain C7 / ATCC BAA-1331).